The following is a 293-amino-acid chain: MAQPMRFMLNHIETESYGAFTPQNLSPLINRAIPHTRAQISGSPVVAVGRGSSGRTFFGVNVELPGLPLDHSIHAEQFLLANLALHFEQKLECIAISTNGYYFQEPCGHCCQLLHKIRDMSDTKILLTNPTGQKGTYMNLSTFLPQGLISQANVPRLLERNFNCIELINHSLYMDICSYSEHCNHLNCRALKAATISYAPDSKCPSGVALIDHRGKVYSGGYMESVAHNTSLGPVQAALVDFVANGDGQEFKNIVEAVLVEKKCGVLSQEATARMILEKIADPDCIFRVLHCK.

2 consecutive CMP/dCMP-type deaminase domains span residues 20–151 and 181–293; these read FTPQ…LISQ and EHCN…LHCK. 61–63 is a substrate binding site; sequence NVE. Residue His-74 coordinates Zn(2+). Catalysis depends on Glu-76, which acts as the Proton donor. The Zn(2+) site is built by Cys-107 and Cys-110.

Belongs to the cytidine and deoxycytidylate deaminase family. Homodimer. It depends on Zn(2+) as a cofactor.

It carries out the reaction cytidine + H2O + H(+) = uridine + NH4(+). It catalyses the reaction 2'-deoxycytidine + H2O + H(+) = 2'-deoxyuridine + NH4(+). Its function is as follows. This enzyme scavenges exogenous and endogenous cytidine and 2'-deoxycytidine for UMP synthesis. This is Cytidine deaminase 8 (CDA8) from Arabidopsis thaliana (Mouse-ear cress).